A 142-amino-acid polypeptide reads, in one-letter code: Hemoglobin subunit alpha-3 (142 aa).

Residues 2–142 (VLSAADKSNV…VSTVLTSKYR (141 aa)) enclose the Globin domain. His-59 contacts O2. A heme b-binding site is contributed by His-88.

Belongs to the globin family. In terms of assembly, heterotetramer of two alpha chains and two beta chains. In terms of tissue distribution, red blood cells.

Its function is as follows. Involved in oxygen transport from the lung to the various peripheral tissues. The sequence is that of Hemoglobin subunit alpha-3 from Bubalus bubalis (Domestic water buffalo).